Consider the following 172-residue polypeptide: Disulfide bond formation protein B (172 aa).

Residues 1 to 13 lie on the Cytoplasmic side of the membrane; sequence MNWLAQLPTQRTP. The helical transmembrane segment at 14-30 threads the bilayer; that stretch reads WLLFSGIVFLLEITALF. Residues 31–48 are Periplasmic-facing; the sequence is FQYKMGLAPCIMCIYQRT. Cysteines 40 and 43 form a disulfide. The chain crosses the membrane as a helical span at residues 49-64; that stretch reads AVLGLLIAGIIGTSNP. At 65–71 the chain is on the cytoplasmic side; it reads EHRGVRL. The chain crosses the membrane as a helical span at residues 72-89; it reads LAYSVWAVSSVWGFIIAR. The Periplasmic segment spans residues 90–145; it reads EHIEMQTTTDPFAFSCEFEPNFPAFMPLHEWIPSFFAATGDCGNIDWQFAGLSMPA. Cysteines 105 and 131 form a disulfide. A helical transmembrane segment spans residues 146 to 164; it reads WMEVIFALFAATLFLLVTS. The Cytoplasmic portion of the chain corresponds to 165–172; sequence RLMTKRSL.

Belongs to the DsbB family.

It localises to the cell inner membrane. Its function is as follows. Required for disulfide bond formation in some periplasmic proteins. Acts by oxidizing the DsbA protein. The polypeptide is Disulfide bond formation protein B (Pseudoalteromonas translucida (strain TAC 125)).